Reading from the N-terminus, the 328-residue chain is MGALSAQVKDELIKVSSTKQRSRIAELASIIRFAGSIDSALGKTVIEIELDNEAVAIRVAKEIEELFAISAKLVDLGPMATRRTPRHVVRIAEDAETLIRRVGLVTRSGHAVVGLPPQIISGSISDAEAAWRGAFLAAGQLSDPGRTSGLEVACPCLEASLALVGCARRLGLSAKPKETRGVEKVVIRDGEAVGALLSRMGAHKTRLVWDQKRARREARPLGNRLANFDDANLRRSARAAVAAAARVERAMTILGDDVPDHLAQAGQLRVQHRQASLEELGRLADPQMTKDAVAGRIRRLLHMADKKASDMGIPDTSVVVTEELLDDF.

Residues 276-309 (SLEELGRLADPQMTKDAVAGRIRRLLHMADKKAS) constitute a DNA-binding region (H-T-H motif).

It belongs to the WhiA family.

In terms of biological role, involved in cell division and chromosome segregation. This Corynebacterium diphtheriae (strain ATCC 700971 / NCTC 13129 / Biotype gravis) protein is Probable cell division protein WhiA.